The chain runs to 638 residues: Growth hormone receptor (638 aa).

Residues 1–18 (MDLWQLLLTLAVAGSGNA) form the signal peptide. The Extracellular segment spans residues 19-264 (VSGSEATPAI…SPFACEEDFQ (246 aa)). Intrachain disulfides connect Cys-56–Cys-66 and Cys-101–Cys-112. An N-linked (GlcNAc...) asparagine glycan is attached at Asn-115. Cys-126 and Cys-140 are disulfide-bonded. Residues 151-254 (PPIGLNWTLL…EVLYVALPQM (104 aa)) form the Fibronectin type-III domain. Residues Asn-156, Asn-161, and Asn-200 are each glycosylated (N-linked (GlcNAc...) asparagine). Residues 240-244 (YGEFS) carry the WSXWS motif motif. Residues 265-288 (FPWFLIIIFGIFGLTMILFLFIFS) form a helical membrane-spanning segment. Residues 289–638 (KQQRIKMLIL…STDQLNKIMP (350 aa)) lie on the Cytoplasmic side of the membrane. A required for JAK2 binding region spans residues 294-379 (KMLILPPVPV…HEKSLNILGA (86 aa)). A Box 1 motif motif is present at residues 297 to 305 (ILPPVPVPK). A UbE motif motif is present at residues 340–349 (DSWVEFIELD). Residue Ser-341 is modified to Phosphoserine. The span at 429-446 (KNQSNSPSTDTAPNTQQP) shows a compositional bias: polar residues. Residues 429–448 (KNQSNSPSTDTAPNTQQPGV) form a disordered region. A phosphotyrosine mark is found at Tyr-487 and Tyr-595.

It belongs to the type I cytokine receptor family. Type 1 subfamily. In terms of assembly, on growth hormone (GH) binding, forms homodimers and binds JAK2 via a box 1-containing domain. In terms of processing, the soluble form (GHBP) is produced by phorbol ester-promoted proteolytic cleavage at the cell surface (shedding) by ADAM17/TACE. Shedding is inhibited by growth hormone (GH) binding to the receptor probably due to a conformational change in GHR rendering the receptor inaccessible to ADAM17. Post-translationally, on GH binding, phosphorylated on tyrosine residues in the cytoplasmic domain by JAK2. Ubiquitinated by the ECS(SOCS2) complex following ligand-binding and phosphorylation by JAK2, leading to its degradation by the proteasome. Regulation by the ECS(SOCS2) complex acts as a negative feedback loop of growth hormone receptor signaling. Ubiquitination is not sufficient for GHR internalization.

It localises to the cell membrane. The protein resides in the secreted. Functionally, receptor for pituitary gland growth hormone (GH1) involved in regulating postnatal body growth. On ligand binding, couples to the JAK2/STAT5 pathway. The soluble form (GHBP) acts as a reservoir of growth hormone in plasma and may be a modulator/inhibitor of GH signaling. The polypeptide is Growth hormone receptor (GHR) (Ailuropoda melanoleuca (Giant panda)).